The sequence spans 711 residues: DNA topoisomerase 1 (711 aa).

A Toprim domain is found at 3–134 (KNLVVIESPN…KCQRITFNEI (132 aa)). Residues glutamate 9 and aspartate 102 each contribute to the Mg(2+) site. Residues 150 to 604 (DQSWVQSQFA…FWSNFKEEVK (455 aa)) form the Topo IA-type catalytic domain. The segment at 183-188 (SAGRVQ) is interaction with DNA. Residue tyrosine 340 is the O-(5'-phospho-DNA)-tyrosine intermediate of the active site. 2 C4-type zinc fingers span residues 624–652 (CPSC…FPNC) and 673–702 (CPEC…FPRC).

Belongs to the type IA topoisomerase family. As to quaternary structure, monomer. Mg(2+) is required as a cofactor.

The enzyme catalyses ATP-independent breakage of single-stranded DNA, followed by passage and rejoining.. In terms of biological role, releases the supercoiling and torsional tension of DNA, which is introduced during the DNA replication and transcription, by transiently cleaving and rejoining one strand of the DNA duplex. Introduces a single-strand break via transesterification at a target site in duplex DNA. The scissile phosphodiester is attacked by the catalytic tyrosine of the enzyme, resulting in the formation of a DNA-(5'-phosphotyrosyl)-enzyme intermediate and the expulsion of a 3'-OH DNA strand. The free DNA strand then undergoes passage around the unbroken strand, thus removing DNA supercoils. Finally, in the religation step, the DNA 3'-OH attacks the covalent intermediate to expel the active-site tyrosine and restore the DNA phosphodiester backbone. This chain is DNA topoisomerase 1, found in Mycoplasma pneumoniae (strain ATCC 29342 / M129 / Subtype 1) (Mycoplasmoides pneumoniae).